The primary structure comprises 1233 residues: Structural maintenance of chromosomes protein 1A (1233 aa).

32–39 is an ATP binding site; it reads GPNGSGKS. 2 coiled-coil regions span residues 104–124 and 163–503; these read EYKI…LEKL and ELAQ…KAEI. The span at 284 to 293 shows a compositional bias: basic and acidic residues; that stretch reads IKEKDSELNQ. Disordered stretches follow at residues 284 to 308 and 348 to 369; these read IKEK…TSHK and QEFE…TLEE. A phosphoserine mark is found at Ser358 and Ser360. An SMC hinge domain is found at 515–629; it reads VYGRLIDLCQ…DNVEDARRIA (115 aa). 2 positions are modified to N6-acetyllysine: Lys648 and Lys713. Residues 667-935 are a coiled coil; it reads DEKAVDKLKE…RHNLLQACKM (269 aa). The disordered stretch occupies residues 947-969; sequence MDDISQEEGSSQGEESVSGSQRT. Low complexity predominate over residues 953–967; that stretch reads EEGSSQGEESVSGSQ. 4 positions are modified to phosphoserine: Ser957, Ser962, Ser966, and Ser970. Residues 988-1068 are a coiled coil; that stretch reads EDLKDAQAEE…FEQIKKERFD (81 aa). Lys1037 carries the post-translational modification N6-acetyllysine.

It belongs to the SMC family. SMC1 subfamily. In terms of assembly, forms a heterodimer with SMC3 in cohesin complexes. Cohesin complexes are composed of the SMC1 (SMC1A or SMC1B) and SMC3 heterodimer attached via their SMC hinge domain, RAD21 which link them, and one STAG protein (STAG1, STAG2 or STAG3), which interacts with RAD21. In germ cell cohesin complexes, SMC1A is mutually exclusive with SMC1B. Interacts with STAG3. Found in a complex with CDCA5, SMC3 and RAD21, PDS5A/SCC-112 and PDS5B/APRIN. Found in a complex containing POLE and SMC3. Interacts with BRCA1, SYCP2, NDC80, RPGR and BRAT1. The cohesin complex interacts with the cohesin loading complex subunits NIPBL/Scc2 (via HEAT repeats) and MAU2/Scc4. NIPBL directly contacts all members of the complex, RAD21, SMC1A/B, SMC3 and STAG1. In terms of processing, phosphorylated upon ionizing radiation or DNA methylation. Phosphorylation of Ser-957 and Ser-966 activates it and is required for S-phase checkpoint activation. Ubiquitinated by the DCX(DCAF15) complex, leading to its degradation. Ubiquitous (at protein level).

The protein localises to the nucleus. It is found in the chromosome. It localises to the centromere. Involved in chromosome cohesion during cell cycle and in DNA repair. Involved in DNA repair via its interaction with BRCA1 and its related phosphorylation by ATM, and works as a downstream effector in the ATM/NBS1 branch of S-phase checkpoint. Central component of cohesin complex. The cohesin complex is required for the cohesion of sister chromatids after DNA replication. The cohesin complex apparently forms a large proteinaceous ring within which sister chromatids can be trapped. At anaphase, the complex is cleaved and dissociates from chromatin, allowing sister chromatids to segregate. The cohesin complex may also play a role in spindle pole assembly during mitosis. Involved in DNA repair via its interaction with BRCA1 and its related phosphorylation by ATM, or via its phosphorylation by ATR. Works as a downstream effector both in the ATM/NBS1 branch and in the ATR/MSH2 branch of S-phase checkpoint. The polypeptide is Structural maintenance of chromosomes protein 1A (Smc1a) (Mus musculus (Mouse)).